Here is a 667-residue protein sequence, read N- to C-terminus: Polypeptide N-acetylgalactosaminyltransferase 3 (667 aa).

Over methionine 1–tryptophan 12 the chain is Cytoplasmic. A helical; Signal-anchor for type II membrane protein transmembrane segment spans residues leucine 13 to alanine 35. Residues serine 36–methionine 667 lie on the Lumenal side of the membrane. N-linked (GlcNAc...) asparagine glycans are attached at residues asparagine 75 and asparagine 129. Intrachain disulfides connect cysteine 140–cysteine 375, cysteine 366–cysteine 446, cysteine 526–cysteine 547, cysteine 572–cysteine 601, and cysteine 626–cysteine 649. The tract at residues leucine 149–arginine 259 is catalytic subdomain A. Substrate contacts are provided by aspartate 190 and arginine 220. Mn(2+) contacts are provided by aspartate 243 and histidine 245. 2 N-linked (GlcNAc...) asparagine glycosylation sites follow: asparagine 279 and asparagine 313. A catalytic subdomain B region spans residues proline 321 to arginine 383. A substrate-binding site is contributed by tryptophan 352. Histidine 380 serves as a coordination point for Mn(2+). Arginine 383 and tyrosine 388 together coordinate substrate. Asparagine 433 carries an N-linked (GlcNAc...) asparagine glycan. Positions glutamate 513–isoleucine 661 constitute a Ricin B-type lectin domain. The N-linked (GlcNAc...) asparagine glycan is linked to asparagine 590.

This sequence belongs to the glycosyltransferase 2 family. GalNAc-T subfamily. Mn(2+) is required as a cofactor. Expressed in developing oocytes and egg chambers. During embryonic stages 9-11, expressed in the primordiums of the foregut, midgut and hindgut. During embryonic stages 12-13, expression is found uniquely in the posterior spiracle. During embryonic stages 14-17, expressed in the pharynx, esophagus and posterior spiracles. Expression observed in the epidermis during embryonic stages 16-17. In third instar larvae, expressed ubiquitously in wing, with increased expression in pleura and notum, eye-antennal, leg and haltere imaginal disks.

Its subcellular location is the golgi apparatus membrane. The catalysed reaction is L-seryl-[protein] + UDP-N-acetyl-alpha-D-galactosamine = a 3-O-[N-acetyl-alpha-D-galactosaminyl]-L-seryl-[protein] + UDP + H(+). It catalyses the reaction L-threonyl-[protein] + UDP-N-acetyl-alpha-D-galactosamine = a 3-O-[N-acetyl-alpha-D-galactosaminyl]-L-threonyl-[protein] + UDP + H(+). It participates in protein modification; protein glycosylation. In terms of biological role, catalyzes the initial reaction in O-linked oligosaccharide biosynthesis, the transfer of an N-acetyl-D-galactosamine residue to a serine or threonine residue on the protein receptor. It can both act as a peptide transferase that transfers GalNAc onto unmodified peptide substrates, and as a glycopeptide transferase that requires the prior addition of a GalNAc on a peptide before adding additional GalNAc moieties. Prefers EA2 as substrate. Has weak activity toward Muc5AC-3, -13 and -3/13 substrates. Plays a critical role in the regulation of integrin-mediated cell adhesion during wing development by influencing, via glycosylation, the secretion and localization of the integrin ligand Tig to the basal cell layer interface. Might have a role in protein O-glycosylation in the Golgi and thereby in establishing and/or maintaining a proper secretory apparatus structure. Together with Pgant35A, regulates integrin levels and activity-dependent integrin signaling at the synapse in neurons and muscles. This is Polypeptide N-acetylgalactosaminyltransferase 3 from Drosophila melanogaster (Fruit fly).